A 259-amino-acid chain; its full sequence is Imidazole glycerol phosphate synthase subunit HisF (259 aa).

Catalysis depends on residues D11 and D130.

Belongs to the HisA/HisF family. In terms of assembly, heterodimer of HisH and HisF.

It is found in the cytoplasm. It catalyses the reaction 5-[(5-phospho-1-deoxy-D-ribulos-1-ylimino)methylamino]-1-(5-phospho-beta-D-ribosyl)imidazole-4-carboxamide + L-glutamine = D-erythro-1-(imidazol-4-yl)glycerol 3-phosphate + 5-amino-1-(5-phospho-beta-D-ribosyl)imidazole-4-carboxamide + L-glutamate + H(+). It participates in amino-acid biosynthesis; L-histidine biosynthesis; L-histidine from 5-phospho-alpha-D-ribose 1-diphosphate: step 5/9. Functionally, IGPS catalyzes the conversion of PRFAR and glutamine to IGP, AICAR and glutamate. The HisF subunit catalyzes the cyclization activity that produces IGP and AICAR from PRFAR using the ammonia provided by the HisH subunit. This Shewanella amazonensis (strain ATCC BAA-1098 / SB2B) protein is Imidazole glycerol phosphate synthase subunit HisF.